The sequence spans 258 residues: Imidazole glycerol phosphate synthase subunit HisF (258 aa).

Catalysis depends on residues Asp11 and Asp130.

It belongs to the HisA/HisF family. In terms of assembly, heterodimer of HisH and HisF.

It localises to the cytoplasm. The catalysed reaction is 5-[(5-phospho-1-deoxy-D-ribulos-1-ylimino)methylamino]-1-(5-phospho-beta-D-ribosyl)imidazole-4-carboxamide + L-glutamine = D-erythro-1-(imidazol-4-yl)glycerol 3-phosphate + 5-amino-1-(5-phospho-beta-D-ribosyl)imidazole-4-carboxamide + L-glutamate + H(+). The protein operates within amino-acid biosynthesis; L-histidine biosynthesis; L-histidine from 5-phospho-alpha-D-ribose 1-diphosphate: step 5/9. Functionally, IGPS catalyzes the conversion of PRFAR and glutamine to IGP, AICAR and glutamate. The HisF subunit catalyzes the cyclization activity that produces IGP and AICAR from PRFAR using the ammonia provided by the HisH subunit. The polypeptide is Imidazole glycerol phosphate synthase subunit HisF (Xanthomonas axonopodis pv. citri (strain 306)).